The sequence spans 360 residues: UDP-N-acetylglucosamine--N-acetylmuramyl-(pentapeptide) pyrophosphoryl-undecaprenol N-acetylglucosamine transferase (360 aa).

Residues 15-17, Asn124, Arg165, Ser191, and Gln285 contribute to the UDP-N-acetyl-alpha-D-glucosamine site; that span reads TGG.

It belongs to the glycosyltransferase 28 family. MurG subfamily.

It is found in the cell inner membrane. It catalyses the reaction di-trans,octa-cis-undecaprenyl diphospho-N-acetyl-alpha-D-muramoyl-L-alanyl-D-glutamyl-meso-2,6-diaminopimeloyl-D-alanyl-D-alanine + UDP-N-acetyl-alpha-D-glucosamine = di-trans,octa-cis-undecaprenyl diphospho-[N-acetyl-alpha-D-glucosaminyl-(1-&gt;4)]-N-acetyl-alpha-D-muramoyl-L-alanyl-D-glutamyl-meso-2,6-diaminopimeloyl-D-alanyl-D-alanine + UDP + H(+). Its pathway is cell wall biogenesis; peptidoglycan biosynthesis. Cell wall formation. Catalyzes the transfer of a GlcNAc subunit on undecaprenyl-pyrophosphoryl-MurNAc-pentapeptide (lipid intermediate I) to form undecaprenyl-pyrophosphoryl-MurNAc-(pentapeptide)GlcNAc (lipid intermediate II). The protein is UDP-N-acetylglucosamine--N-acetylmuramyl-(pentapeptide) pyrophosphoryl-undecaprenol N-acetylglucosamine transferase of Gloeothece citriformis (strain PCC 7424) (Cyanothece sp. (strain PCC 7424)).